Reading from the N-terminus, the 303-residue chain is Endo-1,3;1,4-beta-D-glucanase (303 aa).

The N-terminal stretch at 1–43 (MPSSAQVLLCLAAVLAAAAATTAEAHSQCLDNPPDRSIHGRQL) is a signal peptide. N115, N197, and N257 each carry an N-linked (GlcNAc...) asparagine glycan.

In terms of processing, glycosylated.

It localises to the secreted. In terms of biological role, plays a role in control of plant growth. Mediates specific degradation of cell wall (1,3)(1,4)-beta-D-glucans and is related to auxin-mediated growth and development of cereal coleoptiles. The chain is Endo-1,3;1,4-beta-D-glucanase from Zea mays (Maize).